A 1118-amino-acid polypeptide reads, in one-letter code: Sodium-driven chloride bicarbonate exchanger (1118 aa).

Disordered regions lie at residues 1–23 and 58–97; these read MEIK…EEAV and GRKS…TPSQ. Residues 1–509 are Cytoplasmic-facing; sequence MEIKDQGAQM…DFRDAFSLQC (509 aa). Residues 59–76 are compositionally biased toward basic residues; sequence RKSHRRHRHRGHKHRKRD. The segment covering 77 to 90 has biased composition (basic and acidic residues); sequence RERDSGLEDGRESP. The residue at position 89 (serine 89) is a Phosphoserine. Phosphothreonine is present on threonine 94. Residues histidine 221 and histidine 223 each coordinate Zn(2+). 2 disordered regions span residues 269-310 and 457-476; these read AENK…KGPP and NGTA…GPEL. Position 276 is a phosphoserine (serine 276). The chain crosses the membrane as a helical span at residues 510–530; it reads LASFLFLYCACMSPVITFGGL. Over 531–538 the chain is Extracellular; the sequence is LGEATEGR. A helical transmembrane segment spans residues 539–559; that stretch reads ISAIESLFGASMTGIAYSLFG. The Cytoplasmic segment spans residues 560 to 562; sequence GQP. The helical transmembrane segment at 563–583 threads the bilayer; the sequence is LTILGSTGPVLVFEKILFKFC. The Extracellular segment spans residues 584–596; the sequence is KEYGLSYLSLRAS. The helical transmembrane segment at 597–617 threads the bilayer; the sequence is IGLWTATLCIILVATDASSLV. Residues 618 to 626 are Cytoplasmic-facing; it reads CYITRFTEE. A helical transmembrane segment spans residues 627-647; it reads AFASLICIIFIYEALEKLFEL. The Extracellular portion of the chain corresponds to 648–720; sequence SETYPINMHN…VGRACGHGHP (73 aa). N-linked (GlcNAc...) asparagine glycans are attached at residues asparagine 677, asparagine 687, and asparagine 697. A helical membrane pass occupies residues 721–741; the sequence is YVPDVLFWSVILFFSTVTMSA. The Cytoplasmic segment spans residues 742-762; the sequence is TLKQFKTSRYFPTKVRSIVSD. Residues 763-783 traverse the membrane as a helical segment; sequence FAVFLTILCMVLIDYAIGIPS. At 784-809 the chain is on the extracellular side; that stretch reads PKLQVPSVFKPTRDDRGWFVTPLGPN. Residues 810-830 form a helical membrane-spanning segment; the sequence is PWWTIIAAIIPALLCTILIFM. The Cytoplasmic segment spans residues 831–855; sequence DQQITAVIINRKEHKLKKGCGYHLD. Residues 856–876 traverse the membrane as a helical segment; that stretch reads LLMVAVMLGVCSIMGLPWFVA. Residues 877–912 lie on the Extracellular side of the membrane; it reads ATVLSITHVNSLKLESECSAPGEQPKFLGIREQRVT. A helical membrane pass occupies residues 913 to 933; sequence GLMIFILMGSSVFMTSILKFI. At 934 to 935 the chain is on the cytoplasmic side; it reads PM. A helical membrane pass occupies residues 936-956; that stretch reads PVLYGVFLYMGASSLKGIQLF. The Extracellular portion of the chain corresponds to 957 to 998; that stretch reads DRIKLFWMPAKHQPDFIYLRHVPLRKVHLFTVIQMSCLGLLW. Residues 999–1019 traverse the membrane as a helical segment; that stretch reads IIKVSRAAIVFPMMVLALVFV. Residues 1020–1118 are Cytoplasmic-facing; it reads RKLMDFLFTK…SRFPSKSSPS (99 aa). Phosphoserine occurs at positions 1057 and 1085.

The protein belongs to the anion exchanger (TC 2.A.31) family. In terms of processing, N-glycosylated. In the brain, detected in cerebral cortex, subcortex, cerebellum, hippocampus and medulla (at protein level). In the cerebrum, expressed at high levels throughout the cortex, at lower levels in striatum and not detectable in the corpus callosum (at protein level). In the cerebellum, detected at high levels in the molecular layer but at very low levels in the granular layer (at protein level). In the central nervous system, detected in neurons in the olfactory bulb, cortex and cerebellum (at protein level). Within the hippocampus, abundantly expressed in CA3 pyramidal cells (at protein level). Strongly expressed in the retina with high levels in bipolar and amacrine cells (at protein level). Expressed in the epithelial cells of the choroid plexus. During embryonic development, expressed in neurons of the central nervous system. Also expressed in the peripheral nervous system and in non-neuronal tissues such as the dura and some epithelia including the acid-secreting epithelium of the stomach and the duodenal epithelium. In the embryonic retina, expression is restricted to the neuronal cell layer and the retinal pigment epithelium. In terms of tissue distribution, expressed at high levels in brain and at low levels in the pituitary, testis, kidney and ileum. Also expressed in pancreatic islets.

It localises to the basolateral cell membrane. Its subcellular location is the apical cell membrane. The protein resides in the cell projection. The protein localises to the dendrite. It is found in the axon. It localises to the perikaryon. Its subcellular location is the presynapse. The protein resides in the postsynapse. The catalysed reaction is 2 hydrogencarbonate(out) + chloride(in) + Na(+)(out) = 2 hydrogencarbonate(in) + chloride(out) + Na(+)(in). With respect to regulation, zinc-binding negatively regulates its activity. In terms of biological role, sodium/bicarbonate cotransporter which plays an important role in regulating intracellular pH. Has been shown to act as a sodium/bicarbonate cotransporter in exchange for intracellular chloride. Has also been shown to act as a sodium/biocarbonate cotransporter which is not responsible for net efflux of chloride, with the observed chloride efflux being due to chloride self-exchange. Controls neuronal pH and may contribute to the secretion of cerebrospinal fluid. Acting on presynaptic intracellular pH, it promotes GABA release, reduces the excitability of CA1 pyramidal neurons, and modulates short-term synaptic plasticity. Required in retinal cells to maintain normal pH which is necessary for normal vision. In the kidney, likely to mediate bicarbonate reclamation in the apical membrane of the proximal tubules. Sodium/bicarbonate cotransporter which mediates cotransport of sodium and bicarbonate in association with an efflux of intracellular chloride. The polypeptide is Sodium-driven chloride bicarbonate exchanger (Mus musculus (Mouse)).